A 327-amino-acid chain; its full sequence is DNA-directed RNA polymerase subunit alpha (327 aa).

Residues 1 to 233 (MQGSVTEFLK…EQLEAFVDLR (233 aa)) are alpha N-terminal domain (alpha-NTD). Residues 247–327 (FDPVLLRPVD…NWPPLGFIDK (81 aa)) form an alpha C-terminal domain (alpha-CTD) region.

It belongs to the RNA polymerase alpha chain family. As to quaternary structure, homodimer. The RNAP catalytic core consists of 2 alpha, 1 beta, 1 beta' and 1 omega subunit. When a sigma factor is associated with the core the holoenzyme is formed, which can initiate transcription.

The catalysed reaction is RNA(n) + a ribonucleoside 5'-triphosphate = RNA(n+1) + diphosphate. DNA-dependent RNA polymerase catalyzes the transcription of DNA into RNA using the four ribonucleoside triphosphates as substrates. In Baumannia cicadellinicola subsp. Homalodisca coagulata, this protein is DNA-directed RNA polymerase subunit alpha.